Reading from the N-terminus, the 310-residue chain is tRNA pseudouridine synthase B (310 aa).

The Nucleophile role is filled by D49.

Belongs to the pseudouridine synthase TruB family. Type 1 subfamily.

The catalysed reaction is uridine(55) in tRNA = pseudouridine(55) in tRNA. Functionally, responsible for synthesis of pseudouridine from uracil-55 in the psi GC loop of transfer RNAs. This Rhizobium etli (strain ATCC 51251 / DSM 11541 / JCM 21823 / NBRC 15573 / CFN 42) protein is tRNA pseudouridine synthase B.